A 377-amino-acid chain; its full sequence is Chorismate synthase (377 aa).

Residues Arg-48 and Arg-54 each coordinate NADP(+). FMN is bound by residues 125-127, 238-239, Gly-278, 293-297, and Arg-319; these read RSS, NA, and KPTSS.

Belongs to the chorismate synthase family. In terms of assembly, homotetramer. FMNH2 is required as a cofactor.

The catalysed reaction is 5-O-(1-carboxyvinyl)-3-phosphoshikimate = chorismate + phosphate. It functions in the pathway metabolic intermediate biosynthesis; chorismate biosynthesis; chorismate from D-erythrose 4-phosphate and phosphoenolpyruvate: step 7/7. Functionally, catalyzes the anti-1,4-elimination of the C-3 phosphate and the C-6 proR hydrogen from 5-enolpyruvylshikimate-3-phosphate (EPSP) to yield chorismate, which is the branch point compound that serves as the starting substrate for the three terminal pathways of aromatic amino acid biosynthesis. This reaction introduces a second double bond into the aromatic ring system. The polypeptide is Chorismate synthase (Aromatoleum aromaticum (strain DSM 19018 / LMG 30748 / EbN1) (Azoarcus sp. (strain EbN1))).